A 248-amino-acid polypeptide reads, in one-letter code: DNA repair protein RecO (248 aa).

This sequence belongs to the RecO family.

Involved in DNA repair and RecF pathway recombination. The polypeptide is DNA repair protein RecO (Bacillus cereus (strain 03BB102)).